The primary structure comprises 377 residues: Molybdenum import ATP-binding protein ModC (377 aa).

The region spanning 4 to 240 (IAPRSIRGEF…PALPLATARD (237 aa)) is the ABC transporter domain. ATP is bound at residue 38-45 (GPSGCGKS). The region spanning 299 to 369 (RTSILNILPA…IKGVALAPER (71 aa)) is the Mop domain.

Belongs to the ABC transporter superfamily. Molybdate importer (TC 3.A.1.8) family. As to quaternary structure, the complex is composed of two ATP-binding proteins (ModC), two transmembrane proteins (ModB) and a solute-binding protein (ModA).

The protein resides in the cell inner membrane. The enzyme catalyses molybdate(out) + ATP + H2O = molybdate(in) + ADP + phosphate + H(+). In terms of biological role, part of the ABC transporter complex ModABC involved in molybdenum import. Responsible for energy coupling to the transport system. The protein is Molybdenum import ATP-binding protein ModC of Rhodopseudomonas palustris (strain HaA2).